We begin with the raw amino-acid sequence, 455 residues long: UPF0210 protein Teth514_2074 (455 aa).

Belongs to the UPF0210 family. As to quaternary structure, homodimer.

The polypeptide is UPF0210 protein Teth514_2074 (Thermoanaerobacter sp. (strain X514)).